The sequence spans 264 residues: 2-C-methyl-D-erythritol 4-phosphate cytidylyltransferase (264 aa).

Residues 234–264 form a disordered region; that stretch reads ARDPESAHPQSSVLASAFSGPGSRVSGPEEI.

Belongs to the IspD/TarI cytidylyltransferase family. IspD subfamily.

It carries out the reaction 2-C-methyl-D-erythritol 4-phosphate + CTP + H(+) = 4-CDP-2-C-methyl-D-erythritol + diphosphate. It functions in the pathway isoprenoid biosynthesis; isopentenyl diphosphate biosynthesis via DXP pathway; isopentenyl diphosphate from 1-deoxy-D-xylulose 5-phosphate: step 2/6. Its function is as follows. Catalyzes the formation of 4-diphosphocytidyl-2-C-methyl-D-erythritol from CTP and 2-C-methyl-D-erythritol 4-phosphate (MEP). The polypeptide is 2-C-methyl-D-erythritol 4-phosphate cytidylyltransferase (Xanthomonas euvesicatoria pv. vesicatoria (strain 85-10) (Xanthomonas campestris pv. vesicatoria)).